The following is a 438-amino-acid chain: GTPase Der (438 aa).

2 EngA-type G domains span residues 4–168 and 177–352; these read PIVA…NDPS and IRIA…DNYS. Residues 10–17, 57–61, 120–123, 183–190, 230–234, and 295–298 each bind GTP; these read GRPNVGKS, DTGGI, NKID, GKPNVGKS, DTAGL, and NKWD. A KH-like domain is found at 353–437; that stretch reads KRVSTGLLND…GIEIEYRARK (85 aa).

This sequence belongs to the TRAFAC class TrmE-Era-EngA-EngB-Septin-like GTPase superfamily. EngA (Der) GTPase family. As to quaternary structure, associates with the 50S ribosomal subunit.

GTPase that plays an essential role in the late steps of ribosome biogenesis. This Clostridium perfringens (strain ATCC 13124 / DSM 756 / JCM 1290 / NCIMB 6125 / NCTC 8237 / Type A) protein is GTPase Der.